A 260-amino-acid polypeptide reads, in one-letter code: UPF0246 protein BURPS668_1321 (260 aa).

This sequence belongs to the UPF0246 family.

In Burkholderia pseudomallei (strain 668), this protein is UPF0246 protein BURPS668_1321.